Consider the following 111-residue polypeptide: Ig kappa chain V-III region PC 7940 (111 aa).

The segment at 1-23 (DIVLTQSPASLAVSLGQRATISC) is framework-1. A disulfide bridge links Cys-23 with Cys-92. The complementarity-determining-1 stretch occupies residues 24-38 (RASKSVSAFGYSYMH). A framework-2 region spans residues 39 to 53 (WYQQKPGQPPKLLIY). The complementarity-determining-2 stretch occupies residues 54 to 60 (LASNLES). The segment at 61 to 92 (GVPARFSGSGSGTDFTLNIHPVEEEDAVTYYC) is framework-3. Residues 93 to 101 (QHSRELPPT) form a complementarity-determining-3 region. The framework-4 stretch occupies residues 102–111 (FGGGTKLEIK).

The chain is Ig kappa chain V-III region PC 7940 from Mus musculus (Mouse).